Here is a 116-residue protein sequence, read N- to C-terminus: Iron-sulfur cluster insertion protein ErpA (116 aa).

Iron-sulfur cluster contacts are provided by C44, C108, and C110.

This sequence belongs to the HesB/IscA family. As to quaternary structure, homodimer. It depends on iron-sulfur cluster as a cofactor.

Required for insertion of 4Fe-4S clusters for at least IspG. The protein is Iron-sulfur cluster insertion protein ErpA of Shewanella denitrificans (strain OS217 / ATCC BAA-1090 / DSM 15013).